A 329-amino-acid polypeptide reads, in one-letter code: MQGSVTEFLKPRLVDIEQISSTHAKVILEPLERGFGHTLGNALRRILLSSMPGYAVTEVEIDGVLHEYSSKEGVQEDIIEVLLNLKGLAVKVQNKDNVFLTLSKSGIGPVVAADITHDGDVEIVNPDHVICHLTDENASINMRIRVQRGRGYVPASSRVHSLDEERPIGRLLVDACYSPVDRIAYNVQAARVEQRTDLDKLVIELETNGTIEPEEAIRRAATILAEQLDAFVDLRDVRQPEVKEEKPEFDPILLRPVDDLELTVRSANCLKAETIHYIGDLVQRTEVELLKTPNLGKKSLTEIKDVLVSRGLSLGMRLENWPPASIAED.

Positions 1–235 (MQGSVTEFLK…EQLDAFVDLR (235 aa)) are alpha N-terminal domain (alpha-NTD). An alpha C-terminal domain (alpha-CTD) region spans residues 249-329 (FDPILLRPVD…NWPPASIAED (81 aa)).

Belongs to the RNA polymerase alpha chain family. As to quaternary structure, homodimer. The RNAP catalytic core consists of 2 alpha, 1 beta, 1 beta' and 1 omega subunit. When a sigma factor is associated with the core the holoenzyme is formed, which can initiate transcription.

The catalysed reaction is RNA(n) + a ribonucleoside 5'-triphosphate = RNA(n+1) + diphosphate. DNA-dependent RNA polymerase catalyzes the transcription of DNA into RNA using the four ribonucleoside triphosphates as substrates. This chain is DNA-directed RNA polymerase subunit alpha, found in Histophilus somni (strain 129Pt) (Haemophilus somnus).